Here is a 614-residue protein sequence, read N- to C-terminus: UvrABC system protein C (614 aa).

Positions 12–91 (ESPGVYLMKG…IKKHRPRYNL (80 aa)) constitute a GIY-YIG domain. A UVR domain is found at 201–236 (RDLLKTYRERMASAAANERYEEAARYRDLIRAIEVT).

The protein belongs to the UvrC family. Interacts with UvrB in an incision complex.

It localises to the cytoplasm. In terms of biological role, the UvrABC repair system catalyzes the recognition and processing of DNA lesions. UvrC both incises the 5' and 3' sides of the lesion. The N-terminal half is responsible for the 3' incision and the C-terminal half is responsible for the 5' incision. In Geobacter metallireducens (strain ATCC 53774 / DSM 7210 / GS-15), this protein is UvrABC system protein C.